Reading from the N-terminus, the 176-residue chain is Large ribosomal subunit protein uL6 (176 aa).

Positions 156–170 (YKGKGVRYADEQVRR) are enriched in basic and acidic residues. Residues 156-176 (YKGKGVRYADEQVRRKEAKKK) are disordered.

This sequence belongs to the universal ribosomal protein uL6 family. In terms of assembly, part of the 50S ribosomal subunit.

Its function is as follows. This protein binds to the 23S rRNA, and is important in its secondary structure. It is located near the subunit interface in the base of the L7/L12 stalk, and near the tRNA binding site of the peptidyltransferase center. This chain is Large ribosomal subunit protein uL6, found in Shewanella woodyi (strain ATCC 51908 / MS32).